Here is a 525-residue protein sequence, read N- to C-terminus: Peptide chain release factor 3 (525 aa).

A tr-type G domain is found at D11–A279. GTP contacts are provided by residues S20 to T27, D88 to H92, and N142 to D145.

It belongs to the TRAFAC class translation factor GTPase superfamily. Classic translation factor GTPase family. PrfC subfamily.

The protein resides in the cytoplasm. In terms of biological role, increases the formation of ribosomal termination complexes and stimulates activities of RF-1 and RF-2. It binds guanine nucleotides and has strong preference for UGA stop codons. It may interact directly with the ribosome. The stimulation of RF-1 and RF-2 is significantly reduced by GTP and GDP, but not by GMP. This Levilactobacillus brevis (strain ATCC 367 / BCRC 12310 / CIP 105137 / JCM 1170 / LMG 11437 / NCIMB 947 / NCTC 947) (Lactobacillus brevis) protein is Peptide chain release factor 3.